Reading from the N-terminus, the 209-residue chain is Holliday junction branch migration complex subunit RuvA (209 aa).

Residues 1 to 70 (MFSYLKGEAI…EDGTYLYGFA (70 aa)) form a domain I region. The segment at 71 to 149 (SAAARDLFRQ…QWRDQFSLPD (79 aa)) is domain II. The flexible linker stretch occupies residues 149 to 153 (DTAAQ). The domain III stretch occupies residues 154–209 (PNAAVHEDLELTLLALGYQETEIRGAIATLSQDSILLQNDNADEWIRRAITLLSQT).

This sequence belongs to the RuvA family. As to quaternary structure, homotetramer. Forms an RuvA(8)-RuvB(12)-Holliday junction (HJ) complex. HJ DNA is sandwiched between 2 RuvA tetramers; dsDNA enters through RuvA and exits via RuvB. An RuvB hexamer assembles on each DNA strand where it exits the tetramer. Each RuvB hexamer is contacted by two RuvA subunits (via domain III) on 2 adjacent RuvB subunits; this complex drives branch migration. In the full resolvosome a probable DNA-RuvA(4)-RuvB(12)-RuvC(2) complex forms which resolves the HJ.

It is found in the cytoplasm. Its function is as follows. The RuvA-RuvB-RuvC complex processes Holliday junction (HJ) DNA during genetic recombination and DNA repair, while the RuvA-RuvB complex plays an important role in the rescue of blocked DNA replication forks via replication fork reversal (RFR). RuvA specifically binds to HJ cruciform DNA, conferring on it an open structure. The RuvB hexamer acts as an ATP-dependent pump, pulling dsDNA into and through the RuvAB complex. HJ branch migration allows RuvC to scan DNA until it finds its consensus sequence, where it cleaves and resolves the cruciform DNA. The chain is Holliday junction branch migration complex subunit RuvA from Picosynechococcus sp. (strain ATCC 27264 / PCC 7002 / PR-6) (Agmenellum quadruplicatum).